The chain runs to 1706 residues: Cadherin-99C (1706 aa).

The first 28 residues, 1–28 (MAARNSLTPQQGLGFFGLLILLCSAVLG), serve as a signal peptide directing secretion. The Extracellular segment spans residues 29 to 1395 (KSQMCEVETG…AIDNEVFPFT (1367 aa)). Cadherin domains follow at residues 68 to 142 (DPDT…APRF), 143 to 264 (MNTP…DPSF), 277 to 387 (INPE…PPVI), 388 to 500 (SSSQ…APKL), 519 to 604 (VTQV…PPRF), 605 to 704 (QKPI…NPEF), 707 to 807 (STLP…VPKF), 808 to 908 (SDAR…PPRF), 909 to 1005 (ITVP…RVDV), 1038 to 1148 (SDDS…APEF), and 1156 to 1270 (QQDT…ALSF). Asn-105 and Asn-188 each carry an N-linked (GlcNAc...) asparagine glycan. Residues Asn-442, Asn-553, Asn-620, and Asn-753 are each glycosylated (N-linked (GlcNAc...) asparagine). Residues Asn-1053, Asn-1088, and Asn-1108 are each glycosylated (N-linked (GlcNAc...) asparagine). Asn-1311 and Asn-1367 each carry an N-linked (GlcNAc...) asparagine glycan. Residues 1396–1416 (LIAISLVILILGTIGIIYICI) traverse the membrane as a helical segment. The Cytoplasmic segment spans residues 1417–1706 (SWSKYKNFKQ…RSEVETTTEL (290 aa)).

In terms of assembly, interacts (via the cytoplasmic domain) with ck. Interacts (via the cytoplasmic domain) with Cul1 and Ubr3.

It is found in the apical cell membrane. The protein resides in the endosome membrane. Its subcellular location is the cell projection. It localises to the microvillus membrane. In terms of biological role, cadherin that functions in epithelial morphogenesis and the intestine epithelial immune response. Essential for female fertility. Regulates the length and organization of apical microvilli in developing follicle cells and salivary glands. Function in the follicle cell is essential for egg development as the microvilli secrete eggshell material such as the vitelline membrane. Acts at least in part by regulating the recruitment of the myosin ck to the follicle cell microvilli. Also required to regulate cell rearrangements during salivary tube elongation, possibly by modulating cellular adhesion between the apical surface and apical extracellular matrix during epithelial tube elongation. May also function in cellular adhesion during the development of other tubular epithelia such as the trachea. Possibly functions as an apical membrane determinant which acts in apical membrane expansion during salivary and tracheal epithelial tube elongation. In salivary gland development, this function is independent of the other apical membrane determinants crb and sas. Essential downstream component of a hh-signaling pathway which regulates the Duox-dependent gut epithelial immune response to bacterial uracil; required for endosome formation in the enterocyte and activating norpA-dependent Ca2+ mobilization, which are essential steps in the Duox-dependent production of reactive oxygen species (ROS) in response to intestinal bacterial infection. In Drosophila melanogaster (Fruit fly), this protein is Cadherin-99C.